A 140-amino-acid chain; its full sequence is 3-hydroxyacyl-[acyl-carrier-protein] dehydratase FabZ (140 aa).

His47 is a catalytic residue.

The protein belongs to the thioester dehydratase family. FabZ subfamily.

The protein localises to the cytoplasm. It catalyses the reaction a (3R)-hydroxyacyl-[ACP] = a (2E)-enoyl-[ACP] + H2O. Involved in unsaturated fatty acids biosynthesis. Catalyzes the dehydration of short chain beta-hydroxyacyl-ACPs and long chain saturated and unsaturated beta-hydroxyacyl-ACPs. In Streptococcus pneumoniae (strain 70585), this protein is 3-hydroxyacyl-[acyl-carrier-protein] dehydratase FabZ.